Consider the following 155-residue polypeptide: Protein Smg homolog (155 aa).

The protein belongs to the Smg family.

This Azoarcus sp. (strain BH72) protein is Protein Smg homolog.